The chain runs to 176 residues: Small ribosomal subunit protein uS5 (176 aa).

Positions 14–77 (MQEKLIHINR…DQARRWMTSI (64 aa)) constitute an S5 DRBM domain.

Belongs to the universal ribosomal protein uS5 family. Part of the 30S ribosomal subunit. Contacts proteins S4 and S8.

In terms of biological role, with S4 and S12 plays an important role in translational accuracy. Its function is as follows. Located at the back of the 30S subunit body where it stabilizes the conformation of the head with respect to the body. The polypeptide is Small ribosomal subunit protein uS5 (Acidithiobacillus ferrooxidans (strain ATCC 23270 / DSM 14882 / CIP 104768 / NCIMB 8455) (Ferrobacillus ferrooxidans (strain ATCC 23270))).